The primary structure comprises 255 residues: Spectinomycin 9-adenylyltransferase (255 aa).

It catalyses the reaction spectinomycin + ATP = 9-O-adenylylspectinomycin + diphosphate. Its function is as follows. Mediates bacterial resistance to the antibiotic spectinomycin but not streptomycin. In Enterococcus faecalis (Streptococcus faecalis), this protein is Spectinomycin 9-adenylyltransferase.